Consider the following 491-residue polypeptide: Putative ABC transporter ATP-binding protein TDE_0906 (491 aa).

ABC transporter domains follow at residues 2-241 and 267-491; these read INLN…KQGL and LTLH…KERL. ATP-binding positions include 36–43 and 300–307; these read GKSGCGKT and GKNGCGKT.

It belongs to the ABC transporter superfamily.

Its subcellular location is the cell inner membrane. Functionally, probably part of an ABC transporter complex. Responsible for energy coupling to the transport system. The chain is Putative ABC transporter ATP-binding protein TDE_0906 from Treponema denticola (strain ATCC 35405 / DSM 14222 / CIP 103919 / JCM 8153 / KCTC 15104).